The following is a 707-amino-acid chain: Acetyl-coenzyme A synthetase 1 (707 aa).

Residues 242–245 (RGGK) and Thr361 each bind CoA. ATP is bound by residues 437 to 439 (GEP), 461 to 466 (DTYWQT), Asp553, and Arg568. Ser576 lines the CoA pocket. Arg579 contributes to the ATP binding site. Arg644 provides a ligand contact to CoA. The Microbody targeting signal signature appears at 705 to 707 (VKL).

Belongs to the ATP-dependent AMP-binding enzyme family.

Its subcellular location is the microsome. The protein resides in the endoplasmic reticulum. It catalyses the reaction acetate + ATP + CoA = acetyl-CoA + AMP + diphosphate. Its function is as follows. May be required for assimilation of ethanol and acetate. This Kluyveromyces lactis (strain ATCC 8585 / CBS 2359 / DSM 70799 / NBRC 1267 / NRRL Y-1140 / WM37) (Yeast) protein is Acetyl-coenzyme A synthetase 1 (ACS1).